The following is a 90-amino-acid chain: Small ribosomal subunit protein uS17 (90 aa).

Belongs to the universal ribosomal protein uS17 family. As to quaternary structure, part of the 30S ribosomal subunit.

One of the primary rRNA binding proteins, it binds specifically to the 5'-end of 16S ribosomal RNA. The protein is Small ribosomal subunit protein uS17 of Cutibacterium acnes (strain DSM 16379 / KPA171202) (Propionibacterium acnes).